A 417-amino-acid polypeptide reads, in one-letter code: Serine hydroxymethyltransferase (417 aa).

(6S)-5,6,7,8-tetrahydrofolate-binding positions include L112 and 116–118 (GHL). Position 221 is an N6-(pyridoxal phosphate)lysine (K221). E247 serves as a coordination point for (6S)-5,6,7,8-tetrahydrofolate.

This sequence belongs to the SHMT family. Homodimer. Pyridoxal 5'-phosphate serves as cofactor.

The protein resides in the cytoplasm. The enzyme catalyses (6R)-5,10-methylene-5,6,7,8-tetrahydrofolate + glycine + H2O = (6S)-5,6,7,8-tetrahydrofolate + L-serine. Its pathway is one-carbon metabolism; tetrahydrofolate interconversion. It participates in amino-acid biosynthesis; glycine biosynthesis; glycine from L-serine: step 1/1. Its function is as follows. Catalyzes the reversible interconversion of serine and glycine with tetrahydrofolate (THF) serving as the one-carbon carrier. This reaction serves as the major source of one-carbon groups required for the biosynthesis of purines, thymidylate, methionine, and other important biomolecules. Also exhibits THF-independent aldolase activity toward beta-hydroxyamino acids, producing glycine and aldehydes, via a retro-aldol mechanism. This chain is Serine hydroxymethyltransferase, found in Borrelia turicatae (strain 91E135).